The sequence spans 323 residues: Acetyl esterase (323 aa).

The Involved in the stabilization of the negatively charged intermediate by the formation of the oxyanion hole signature appears at H91–G93. Active-site residues include S165, D262, and H292.

Belongs to the 'GDXG' lipolytic enzyme family. As to quaternary structure, homodimer. Interacts with MalT and MelA.

It localises to the cytoplasm. Its function is as follows. Displays esterase activity towards short chain fatty esters (acyl chain length of up to 8 carbons). Able to hydrolyze triacetylglycerol (triacetin) and tributyrylglycerol (tributyrin), but not trioleylglycerol (triolein) or cholesterol oleate. Negatively regulates MalT activity by antagonizing maltotriose binding. Inhibits MelA galactosidase activity. This is Acetyl esterase from Salmonella dublin (strain CT_02021853).